Reading from the N-terminus, the 206-residue chain is Thymidylate kinase (206 aa).

10-17 contacts ATP; the sequence is GIDGAGKS.

It belongs to the thymidylate kinase family.

The catalysed reaction is dTMP + ATP = dTDP + ADP. Its function is as follows. Phosphorylation of dTMP to form dTDP in both de novo and salvage pathways of dTTP synthesis. This is Thymidylate kinase from Neisseria meningitidis serogroup C / serotype 2a (strain ATCC 700532 / DSM 15464 / FAM18).